The following is a 118-amino-acid chain: Nitrogenase-stabilizing/protective protein NifW (118 aa).

It belongs to the NifW family. In terms of assembly, homotrimer; associates with NifD.

May protect the nitrogenase Fe-Mo protein from oxidative damage. This chain is Nitrogenase-stabilizing/protective protein NifW, found in Rhodopseudomonas palustris (strain BisB5).